The chain runs to 481 residues: GDP-fucose protein O-fucosyltransferase 3 (481 aa).

Residues 1-8 (MVRFQRRK) are Cytoplasmic-facing. Residues 9–31 (LLASCLCVTATVFLMVTLQVVVE) form a helical; Signal-anchor for type II membrane protein membrane-spanning segment. The Lumenal segment spans residues 32–481 (LGKFERKKLK…EEFWALVFKD (450 aa)). Asparagine 110, asparagine 168, and asparagine 318 each carry an N-linked (GlcNAc...) asparagine glycan. Cysteine 389 and cysteine 392 are joined by a disulfide. Asparagine 468 is a glycosylation site (N-linked (GlcNAc...) asparagine).

Belongs to the glycosyltransferase 10 family. Widely expressed, with a higher expression in liver and thymus.

The protein localises to the endoplasmic reticulum membrane. It carries out the reaction L-threonyl-[protein] + GDP-beta-L-fucose = 3-O-(alpha-L-fucosyl)-L-threonyl-[protein] + GDP + H(+). The catalysed reaction is L-seryl-[protein] + GDP-beta-L-fucose = 3-O-(alpha-L-fucosyl)-L-seryl-[protein] + GDP + H(+). The protein operates within protein modification; protein glycosylation. In terms of biological role, protein O-fucosyltransferase that specifically catalyzes O-fucosylation of serine or threonine residues in EMI domains of target proteins, such as MMRN1, MMRN2 and EMID1. Attaches fucose through an O-glycosidic linkage. O-fucosylation of EMI domain-containing proteins may be required for facilitating protein folding and secretion. May also show alpha-(1,3)-fucosyltransferase activity toward the innermost N-acetyl glucosamine (GlcNAc) residue in biantennary N-glycan acceptors. However, this was tested with a library of synthetic substrates and this activity is unsure in vivo. May be involved in biosynthesis of Lewis X-carrying biantennary N-glycans that regulate neuron stem cell self-renewal during brain development. The protein is GDP-fucose protein O-fucosyltransferase 3 of Mus musculus (Mouse).